The primary structure comprises 768 residues: UPF0313 protein VV2143 (768 aa).

The region spanning 363 to 640 is the Radical SAM core domain; sequence AYDMIKTSVN…LHKALLRYHD (278 aa). Residues Cys377, Cys381, and Cys384 each coordinate [4Fe-4S] cluster. The tract at residues 674–768 is disordered; it reads DARTPAQRRK…GGRNQPSRAR (95 aa). Basic residues predominate over residues 679 to 689; the sequence is AQRRKSGRHGA. The segment covering 719–731 has biased composition (polar residues); sequence GGQSNSAPSRSGS.

The protein belongs to the UPF0313 family. Requires [4Fe-4S] cluster as cofactor.

This chain is UPF0313 protein VV2143, found in Vibrio vulnificus (strain YJ016).